Here is a 59-residue protein sequence, read N- to C-terminus: Zinc finger protein HVO_2753 (59 aa).

4 short sequence motifs (c(P)XCG motif) span residues 12-16, 29-33, 39-43, and 51-55; these read CVSCG, CPDCG, and CSKCR. Positions 29 and 32 each coordinate Zn(2+). Cys-51 and Cys-54 together coordinate Zn(2+).

As to quaternary structure, monomer in solution.

Its function is as follows. Zinc-binding protein that binds only one zinc ion. Is required for swarming and biofilm formation. This chain is Zinc finger protein HVO_2753, found in Haloferax volcanii (strain ATCC 29605 / DSM 3757 / JCM 8879 / NBRC 14742 / NCIMB 2012 / VKM B-1768 / DS2) (Halobacterium volcanii).